Consider the following 355-residue polypeptide: uncharacterized protein (355 aa).

Residue 58–65 coordinates ATP; it reads GYIIFGIK.

This is an uncharacterized protein from Ureaplasma parvum serovar 3 (strain ATCC 700970).